The following is a 328-amino-acid chain: Protein phosphatase 1 regulatory inhibitor subunit PPP1R7 homolog (328 aa).

LRR repeat units lie at residues 13–36 (IGDS…VELP), 37–59 (PNLI…IAQL), 61–82 (TLKK…PLSH), 86–110 (LSDL…IFTK), 111–130 (LLVY…ISKA), 131–153 (SSTL…IEHL), 154–177 (HNLQ…NFTK), 179–196 (EELW…LCGL), 197–221 (KCIK…CVAL), 223–240 (ELYL…LSAL), 241–264 (VNLR…NLTK), 266–287 (EDLW…AVTG), and 289–312 (KEKL…VAAV).

Interacts with human protein phosphatase PPP1C.

Inhibitor of protein-phosphatase 1 (PP1). Binds to and inhibits PP1 activity. The protein is Protein phosphatase 1 regulatory inhibitor subunit PPP1R7 homolog of Arabidopsis thaliana (Mouse-ear cress).